The chain runs to 409 residues: Probable ATP-dependent RNA helicase MG308 homolog (409 aa).

Residues 26 to 179 form the Helicase ATP-binding domain; it reads VFKVWPRQNV…RKQVAPLTVV (154 aa). 39-46 is an ATP binding site; the sequence is AETGSGKT. The short motif at 126-129 is the DEVD box element; that stretch reads DEVD. Positions 190 to 349 constitute a Helicase C-terminal domain; that stretch reads LVKHFLLNLN…SVHLERDGTL (160 aa).

The protein belongs to the DEAD box helicase family.

The catalysed reaction is ATP + H2O = ADP + phosphate + H(+). The protein is Probable ATP-dependent RNA helicase MG308 homolog of Mycoplasma pneumoniae (strain ATCC 29342 / M129 / Subtype 1) (Mycoplasmoides pneumoniae).